Consider the following 261-residue polypeptide: Cell division protein DivIB (261 aa).

The Cytoplasmic portion of the chain corresponds to M1 to R27. Residues L28 to P48 form a helical membrane-spanning segment. The tract at residues S47 to E117 is alpha. Residues L49–P261 are Extracellular-facing. The POTRA domain maps to G50–W118. Residues W118–R230 are beta. Positions N231–S260 are gamma.

The protein belongs to the FtsQ/DivIB family. DivIB subfamily.

It is found in the cell membrane. In terms of biological role, cell division protein that may be involved in stabilizing or promoting the assembly of the division complex. This is Cell division protein DivIB from Geobacillus kaustophilus (strain HTA426).